Here is a 256-residue protein sequence, read N- to C-terminus: MNNAIFPNKFKAALAAQQVQIGCWSALASPITTEVLGLAGFDWLVLDGEHAPNDVSTLIPQLMALKGSASAPVVRVPTNEPVIIKRMLDIGFYNFLIPFVETQEEAARAVASTRYPPEGIRGVSVSHRANMFGTVPDYFAQSNKNITIIVQIESQLGVDNVDAIAATEGVDGIFVGPSDLAAALGHLGNASHPDVQQTIQHIFARAKAHGKPCGILAPVEADARRYLEWGATFVAVGSDLGAFRASTQKLADTFKK.

His50 functions as the Proton acceptor in the catalytic mechanism. Gln151 contributes to the substrate binding site. Glu153 provides a ligand contact to Mg(2+). Residues Ser178 and Asp179 each coordinate substrate. Asp179 contacts Mg(2+).

This sequence belongs to the HpcH/HpaI aldolase family. KDGluc aldolase subfamily. In terms of assembly, homohexamer; trimer of dimers. Requires Mg(2+) as cofactor.

It catalyses the reaction 5-dehydro-4-deoxy-D-glucarate = 2-hydroxy-3-oxopropanoate + pyruvate. It carries out the reaction 2-dehydro-3-deoxy-D-glucarate = 2-hydroxy-3-oxopropanoate + pyruvate. It functions in the pathway carbohydrate acid metabolism; galactarate degradation; D-glycerate from galactarate: step 2/3. Its function is as follows. Catalyzes the reversible retro-aldol cleavage of both 5-keto-4-deoxy-D-glucarate and 2-keto-3-deoxy-D-glucarate to pyruvate and tartronic semialdehyde. The polypeptide is 5-keto-4-deoxy-D-glucarate aldolase (Salmonella paratyphi A (strain ATCC 9150 / SARB42)).